A 313-amino-acid chain; its full sequence is Ribosomal RNA small subunit methyltransferase H (313 aa).

S-adenosyl-L-methionine-binding positions include 33 to 35, Asp-53, Phe-80, Asp-101, and Gln-108; that span reads GGH. Positions 282–313 are disordered; sequence LVHNKPLTPSEAEIEQNPRARSAKLRVAQKLA.

The protein belongs to the methyltransferase superfamily. RsmH family.

It is found in the cytoplasm. The enzyme catalyses cytidine(1402) in 16S rRNA + S-adenosyl-L-methionine = N(4)-methylcytidine(1402) in 16S rRNA + S-adenosyl-L-homocysteine + H(+). Specifically methylates the N4 position of cytidine in position 1402 (C1402) of 16S rRNA. The sequence is that of Ribosomal RNA small subunit methyltransferase H from Magnetococcus marinus (strain ATCC BAA-1437 / JCM 17883 / MC-1).